A 389-amino-acid chain; its full sequence is Zip homologous protein 3 (389 aa).

An RING-type zinc finger spans residues 6-43; it reads CNKCFNRKPPDGFFISSCFHIFCTKCAKADLAVCLICK. Residues 123–164 adopt a coiled-coil conformation; the sequence is LAEATAWIQMAEKKLQASEEERVKAEREIEECQAKLKSMTNL. The interval 366-389 is disordered; sequence ISSQPGYLAQRKPINGRSFIGPAD.

Interacts with zhp-4; the interaction is required for their localization along paired chromosomes and stability, and for the formation of chiasma during meiotic recombination. In terms of tissue distribution, expressed througout the gonad (at protein level). Expressed in the germline.

The protein localises to the chromosome. In terms of biological role, recruited co-dependently with zhp-4 to the synaptonemal complex between homologous chromosome pairs to regulate the formation and number of crossover events between homologs during meiotic recombination. In the early stages of pachytene, in complex with zhp-4, recruited by the zhp-1-zhp-2 heterodimer to designated crossover sites along the homolog pair to stabilize other pro-crossover factors such as rmh-1, msh-5 and cosa-1. This in turn facilitates crossover and promotes the formation of chiasma in each meiotic nucleus at the late pachytene stage of meiosis. Plays a role in the segregation of homologous chromosomes following the completion of crossovers. Together with him-14 and msh-5 plays a role in the activation of DNA damage-dependent apoptosis at the DNA damage checkpoint in pachytene cells. The chain is Zip homologous protein 3 from Caenorhabditis elegans.